The following is a 225-amino-acid chain: UPF0128 protein PH1314 (225 aa).

Belongs to the UPF0128 family.

The protein is UPF0128 protein PH1314 of Pyrococcus horikoshii (strain ATCC 700860 / DSM 12428 / JCM 9974 / NBRC 100139 / OT-3).